The sequence spans 693 residues: Elongation factor G (693 aa).

Residues 8-282 (EHTRNIGIMA…AVIDFMPSPT (275 aa)) enclose the tr-type G domain. GTP is bound by residues 17-24 (AHIDAGKT), 81-85 (DTPGH), and 135-138 (NKMD).

The protein belongs to the TRAFAC class translation factor GTPase superfamily. Classic translation factor GTPase family. EF-G/EF-2 subfamily.

The protein localises to the cytoplasm. Functionally, catalyzes the GTP-dependent ribosomal translocation step during translation elongation. During this step, the ribosome changes from the pre-translocational (PRE) to the post-translocational (POST) state as the newly formed A-site-bound peptidyl-tRNA and P-site-bound deacylated tRNA move to the P and E sites, respectively. Catalyzes the coordinated movement of the two tRNA molecules, the mRNA and conformational changes in the ribosome. The chain is Elongation factor G from Ruminiclostridium cellulolyticum (strain ATCC 35319 / DSM 5812 / JCM 6584 / H10) (Clostridium cellulolyticum).